A 635-amino-acid polypeptide reads, in one-letter code: Sodium- and chloride-dependent creatine transporter 1 (635 aa).

Residues 1-28 (MAKKSAENGIYSVSGDEKKGPLIAPGPD) form a disordered region. The Cytoplasmic portion of the chain corresponds to 1 to 60 (MAKKSAENGIYSVSGDEKKGPLIAPGPDGAPAKGDGPVGLGTPGGRLAVPPRETWTRQMD). T42 bears the Phosphothreonine mark. The helical transmembrane segment at 61-81 (FIMSCVGFAVGLGNVWRFPYL) threads the bilayer. Over 82–87 (CYKNGG) the chain is Extracellular. The chain crosses the membrane as a helical span at residues 88-108 (GVFLIPYVLIALVGGIPIFFL). Over 109–138 (EISLGQFMKAGSINVWNICPLFKGLGYASM) the chain is Cytoplasmic. Residues 139–159 (VIVFYCNTYYIMVLAWGFYYL) form a helical membrane-spanning segment. Over 160–230 (VKSFTTTLPW…LSGGLEVPGA (71 aa)) the chain is Extracellular. 2 N-linked (GlcNAc...) asparagine glycosylation sites follow: N192 and N197. Residues 231-251 (LNWEVTLCLLACWVLVYFCVW) traverse the membrane as a helical segment. Residues 252 to 269 (KGVKSTGKIVYFTATFPY) lie on the Cytoplasmic side of the membrane. A helical membrane pass occupies residues 270–290 (VVLVVLLVRGVLLPGALDGII). Over 291–304 (YYLKPDWSKLGSPQ) the chain is Extracellular. The helical transmembrane segment at 305–325 (VWIDAGTQIFFSYAIGLGALT) threads the bilayer. At 326-341 (ALGSYNRFNNNCYKDA) the chain is on the cytoplasmic side. Residues 342 to 362 (IILALINSGTSFFAGFVVFSI) form a helical membrane-spanning segment. The Extracellular segment spans residues 363–394 (LGFMAAEQGVHISKVAESGPGLAFIAYPRAVT). The chain crosses the membrane as a helical span at residues 395 to 415 (LMPVAPLWAALFFFMLLLLGL). Residues 416–444 (DSQFVGVEGFITGLLDLLPASYYFRFQRE) lie on the Cytoplasmic side of the membrane. A helical transmembrane segment spans residues 445–465 (ISVALCCALCFVIDLSMVTDG). At 466 to 479 (GMYVFQLFDYYSAS) the chain is on the extracellular side. The helical transmembrane segment at 480-500 (GTTLLWQAFWECVVVAWVYGA) threads the bilayer. At 501 to 520 (DRFMDDIACMIGYRPCPWMK) the chain is on the cytoplasmic side. Residues 521 to 541 (WCWSFFTPLVCMGIFIFNVVY) form a helical membrane-spanning segment. The Extracellular portion of the chain corresponds to 542–560 (YEPLVYNNTYVYPWWGEAM). N548 is a glycosylation site (N-linked (GlcNAc...) asparagine). A helical membrane pass occupies residues 561–581 (GWAFALSSMLCVPLHLLGCLL). The Cytoplasmic segment spans residues 582–635 (RAKGTMAERWQHLTQPIWGLHHLEYRAQDADVRGLTTLTPVSESSKVVVVESVM). A phosphothreonine mark is found at T617 and T620. Position 623 is a phosphoserine (S623).

This sequence belongs to the sodium:neurotransmitter symporter (SNF) (TC 2.A.22) family. SLC6A8 subfamily. In terms of processing, glycosylated. In terms of tissue distribution, predominantly expressed in skeletal muscle and kidney. Also found in brain, heart, colon, testis and prostate.

It is found in the cell membrane. The protein resides in the apical cell membrane. It catalyses the reaction creatine(out) + chloride(out) + 2 Na(+)(out) = creatine(in) + chloride(in) + 2 Na(+)(in). Creatine:sodium symporter which mediates the uptake of creatine. Plays an important role in supplying creatine to the brain via the blood-brain barrier. This chain is Sodium- and chloride-dependent creatine transporter 1 (SLC6A8), found in Homo sapiens (Human).